The chain runs to 238 residues: Ditrans,polycis-undecaprenyl-diphosphate synthase ((2E,6E)-farnesyl-diphosphate specific) (238 aa).

The active site involves aspartate 14. Aspartate 14 provides a ligand contact to Mg(2+). Substrate-binding positions include 15 to 18 (GNGR), tryptophan 19, arginine 27, histidine 31, and 59 to 61 (SSE). Asparagine 62 serves as the catalytic Proton acceptor. Residues tryptophan 63, arginine 65, arginine 182, and 188–190 (RIS) each bind substrate. Glutamate 201 provides a ligand contact to Mg(2+).

The protein belongs to the UPP synthase family. As to quaternary structure, homodimer. Mg(2+) serves as cofactor.

The enzyme catalyses 8 isopentenyl diphosphate + (2E,6E)-farnesyl diphosphate = di-trans,octa-cis-undecaprenyl diphosphate + 8 diphosphate. Its function is as follows. Catalyzes the sequential condensation of isopentenyl diphosphate (IPP) with (2E,6E)-farnesyl diphosphate (E,E-FPP) to yield (2Z,6Z,10Z,14Z,18Z,22Z,26Z,30Z,34E,38E)-undecaprenyl diphosphate (di-trans,octa-cis-UPP). UPP is the precursor of glycosyl carrier lipid in the biosynthesis of bacterial cell wall polysaccharide components such as peptidoglycan and lipopolysaccharide. The sequence is that of Ditrans,polycis-undecaprenyl-diphosphate synthase ((2E,6E)-farnesyl-diphosphate specific) from Legionella pneumophila (strain Paris).